The following is a 149-amino-acid chain: Flagellar assembly factor FliW (149 aa).

It belongs to the FliW family. As to quaternary structure, interacts with translational regulator CsrA and flagellin(s).

The protein localises to the cytoplasm. Acts as an anti-CsrA protein, binds CsrA and prevents it from repressing translation of its target genes, one of which is flagellin. Binds to flagellin and participates in the assembly of the flagellum. The protein is Flagellar assembly factor FliW of Thermotoga maritima (strain ATCC 43589 / DSM 3109 / JCM 10099 / NBRC 100826 / MSB8).